Consider the following 433-residue polypeptide: MVWKVAVFLSAALVIGAVPIDDPEDGGKHWVVIVAGSNGWYNYRHQADACHAYQIIHRNGIPDEQIVVMMYDDIAYSEDNPTPGIVINRPNGTDVYQGVPKDYTGEDVTPQNFLAVLRGDAEAVKGIGSGKVLKSGPQDHVFVYSTDHGSTGILVFPNEDLHVEDLNETIHYMYKHKMYRKMVFYIEACESGSMMNHLPDNINVYATTAANPRESSYACYYDEKRSTYLGDWYSVNWMEDSDVEDLTKETLHKQYHLVKSHTNTSHVMQYGNKTISTMKVMQFQGMKHKASSPISLPPVTHLDLTPSPDVPLTIMKRKLMNTNDLEESRQLTEEIQQHLDARHLIEKSVRKIVSLLAASEAEVEQLLSERAPLTGHSCYPEALLHFRTHCFNWHSPTYEYALRHLYVLVNLCEKPYPLHRIKLSMDHVCLGHY.

The first 17 residues, 1–17, serve as a signal peptide directing secretion; that stretch reads MVWKVAVFLSAALVIGA. N-linked (GlcNAc...) asparagine glycosylation occurs at N91. Residue H148 is part of the active site. A glycan (N-linked (GlcNAc...) asparagine) is linked at N167. The active-site Nucleophile is the C189. N263 and N272 each carry an N-linked (GlcNAc...) asparagine glycan. The propeptide occupies 324–433; it reads DLEESRQLTE…SMDHVCLGHY (110 aa). Disulfide bonds link C378/C412 and C390/C429.

Belongs to the peptidase C13 family. Homodimer before autocatalytic removal of the propeptide. Monomer after autocatalytic processing. May interact with integrins. Post-translationally, activated by autocatalytic processing at pH 4.

The protein resides in the lysosome. The catalysed reaction is Hydrolysis of proteins and small molecule substrates at -Asn-|-Xaa- bonds.. Functionally, has a strict specificity for hydrolysis of asparaginyl bonds. Can also cleave aspartyl bonds slowly, especially under acidic conditions. Involved in the processing of proteins for MHC class II antigen presentation in the lysosomal/endosomal system. Also involved in MHC class I antigen presentation in cross-presenting dendritic cells by mediating cleavage and maturation of Perforin-2 (MPEG1), thereby promoting antigen translocation in the cytosol. Required for normal lysosomal protein degradation in renal proximal tubules. Required for normal degradation of internalized EGFR. Plays a role in the regulation of cell proliferation via its role in EGFR degradation. This is Legumain (LGMN) from Pongo abelii (Sumatran orangutan).